The primary structure comprises 332 residues: Transaldolase (332 aa).

The Schiff-base intermediate with substrate role is filled by lysine 135.

Belongs to the transaldolase family. Type 1 subfamily. As to quaternary structure, homodimer.

It is found in the cytoplasm. It carries out the reaction D-sedoheptulose 7-phosphate + D-glyceraldehyde 3-phosphate = D-erythrose 4-phosphate + beta-D-fructose 6-phosphate. Its pathway is carbohydrate degradation; pentose phosphate pathway; D-glyceraldehyde 3-phosphate and beta-D-fructose 6-phosphate from D-ribose 5-phosphate and D-xylulose 5-phosphate (non-oxidative stage): step 2/3. In terms of biological role, transaldolase is important for the balance of metabolites in the pentose-phosphate pathway. The polypeptide is Transaldolase (Prochlorococcus marinus (strain NATL2A)).